Here is a 328-residue protein sequence, read N- to C-terminus: Tetraacyldisaccharide 4'-kinase (328 aa).

55–62 (TAGGNGKT) is an ATP binding site.

Belongs to the LpxK family.

The catalysed reaction is a lipid A disaccharide + ATP = a lipid IVA + ADP + H(+). The protein operates within glycolipid biosynthesis; lipid IV(A) biosynthesis; lipid IV(A) from (3R)-3-hydroxytetradecanoyl-[acyl-carrier-protein] and UDP-N-acetyl-alpha-D-glucosamine: step 6/6. Its function is as follows. Transfers the gamma-phosphate of ATP to the 4'-position of a tetraacyldisaccharide 1-phosphate intermediate (termed DS-1-P) to form tetraacyldisaccharide 1,4'-bis-phosphate (lipid IVA). In Escherichia coli O45:K1 (strain S88 / ExPEC), this protein is Tetraacyldisaccharide 4'-kinase.